The sequence spans 423 residues: UPF0229 protein VP0986 (423 aa).

Residues 69–112 (GGVRERVHPGNDQFITGDKIERPKGGGQGSGSGEGNASPDGEGQ) are disordered. Positions 93–102 (GGGQGSGSGE) are enriched in gly residues.

Belongs to the UPF0229 family.

This chain is UPF0229 protein VP0986, found in Vibrio parahaemolyticus serotype O3:K6 (strain RIMD 2210633).